The primary structure comprises 65 residues: Large ribosomal subunit protein bL35 (65 aa).

Residues 1 to 30 form a disordered region; the sequence is MPKMKTVSGAAKRFKKTGSGRFKSKQSHLR. Positions 12–30 are enriched in basic residues; sequence KRFKKTGSGRFKSKQSHLR.

Belongs to the bacterial ribosomal protein bL35 family.

The polypeptide is Large ribosomal subunit protein bL35 (Alteromonas mediterranea (strain DSM 17117 / CIP 110805 / LMG 28347 / Deep ecotype)).